Consider the following 497-residue polypeptide: uncharacterized protein (497 aa).

A run of 11 helical transmembrane segments spans residues 91–111 (WVGT…STLL), 119–139 (VTSA…LVHS), 149–169 (LLGI…AQWY), 179–199 (AFLV…SYGL), 215–235 (ILFI…FIHI), 283–303 (MYLY…LSNF), 319–339 (LLMN…FGLI), 347–367 (MDIA…IAFA), 374–394 (LAGY…LSCI), 406–426 (FMSA…PQTF), and 439–459 (VSFV…YAVN).

This sequence belongs to the major facilitator superfamily. Allantoate permease family.

The protein localises to the golgi apparatus. It localises to the membrane. This is an uncharacterized protein from Schizosaccharomyces pombe (strain 972 / ATCC 24843) (Fission yeast).